Reading from the N-terminus, the 400-residue chain is Axin-like protein 1 (400 aa).

The 129-residue stretch at R4 to W132 folds into the RGS domain. Disordered regions lie at residues Q190–V233 and G278–A306. The span at N194–S210 shows a compositional bias: basic and acidic residues. Positions F287–Q298 are enriched in polar residues. The DIX domain occupies E305–P392.

In terms of assembly, interacts with bar-1, dsh-2, gsk-3, and mig-5.

Functionally, works in parallel with pry-1 in negatively regulating bar-1 signaling in vulval precursor cells and Q neuroblasts. Shown to have a role in excretory cell development. The protein is Axin-like protein 1 of Caenorhabditis elegans.